We begin with the raw amino-acid sequence, 375 residues long: Phytanoyl-CoA hydroxylase-interacting protein-like (375 aa).

Ser11, Ser12, and Ser15 each carry phosphoserine. A glycan (N-linked (GlcNAc...) asparagine) is linked at Asn22. Ser24 carries the post-translational modification Phosphoserine. N-linked (GlcNAc...) asparagine glycosylation occurs at Asn36. Positions 51–160 (VPHNIKINNI…EIIEFCTADY (110 aa)) constitute a Fibronectin type-III domain.

It belongs to the PHYHIP family.

Its function is as follows. May play a role in the development of the central system. The polypeptide is Phytanoyl-CoA hydroxylase-interacting protein-like (Phyhipl) (Mus musculus (Mouse)).